The primary structure comprises 387 residues: Ferrochelatase (387 aa).

The tract at residues 1-318 is ferrochelatase; sequence MGRVGVLLLN…VFIDALAQMV (318 aa). The Fe cation site is built by H196 and E277. Positions 319–387 are hlip domain; it reads MDSLNDPPCT…QGPLHFVGLL (69 aa).

This sequence in the N-terminal section; belongs to the ferrochelatase family. The protein in the C-terminal section; belongs to the Hlip family.

It localises to the cytoplasm. It carries out the reaction heme b + 2 H(+) = protoporphyrin IX + Fe(2+). It participates in porphyrin-containing compound metabolism; protoheme biosynthesis; protoheme from protoporphyrin-IX: step 1/1. In terms of biological role, catalyzes the ferrous insertion into protoporphyrin IX. The Hlip proteins might regulate tetrapyrrole biosynthesis, maybe at the level of aminolevulinic acid synthesis. Deletion of 4 to 5 members of the Hlip family (always including this member) suggests the proteins are involved in regulation of chlorophyll biosynthesis, in stabilization of chlorophyll-binding proteins and/or in reuse of chlorophylls, and may regulate tetrapyrrole biosynthesis. The Hlip proteins probably stabilize PSII assembly intermediates. The sequence is that of Ferrochelatase from Synechocystis sp. (strain ATCC 27184 / PCC 6803 / Kazusa).